The chain runs to 230 residues: Pyridoxine/pyridoxamine 5'-phosphate oxidase (230 aa).

Substrate-binding positions include 21 to 24 (RVEY) and Lys87. FMN-binding positions include 82-87 (RSVLCK), 97-98 (YT), Lys104, and Gln126. Substrate-binding residues include Tyr144, Arg148, and Ser152. FMN-binding positions include 161 to 162 (QS) and Trp207. 213 to 215 (RVH) serves as a coordination point for substrate. Residue Arg217 coordinates FMN.

It belongs to the pyridoxamine 5'-phosphate oxidase family. As to quaternary structure, homodimer. FMN is required as a cofactor.

The catalysed reaction is pyridoxamine 5'-phosphate + O2 + H2O = pyridoxal 5'-phosphate + H2O2 + NH4(+). It catalyses the reaction pyridoxine 5'-phosphate + O2 = pyridoxal 5'-phosphate + H2O2. It functions in the pathway cofactor metabolism; pyridoxal 5'-phosphate salvage; pyridoxal 5'-phosphate from pyridoxamine 5'-phosphate: step 1/1. The protein operates within cofactor metabolism; pyridoxal 5'-phosphate salvage; pyridoxal 5'-phosphate from pyridoxine 5'-phosphate: step 1/1. Catalyzes the oxidation of either pyridoxine 5'-phosphate (PNP) or pyridoxamine 5'-phosphate (PMP) into pyridoxal 5'-phosphate (PLP). This chain is Pyridoxine/pyridoxamine 5'-phosphate oxidase, found in Mycolicibacterium smegmatis (strain ATCC 700084 / mc(2)155) (Mycobacterium smegmatis).